The sequence spans 185 residues: Glycine-rich cell wall structural protein 2 (185 aa).

Positions Met1–Leu27 are cleaved as a signal peptide. Residues Gly149–His185 form a disordered region.

The protein localises to the secreted. It localises to the cell wall. Its function is as follows. Responsible for plasticity of the cell wall. This Oryza sativa subsp. indica (Rice) protein is Glycine-rich cell wall structural protein 2 (GRP0.9).